The sequence spans 223 residues: Sigma non-opioid intracellular receptor 1 (223 aa).

Residues 1 to 9 (MPWAVGRRW) are Lumenal-facing. A targeting to endoplasmic reticulum-associated lipid droplets region spans residues 2–8 (PWAVGRR). Residues 10–30 (AWITLFLTIVAVLIQAVWLWL) traverse the membrane as a helical segment. The Cytoplasmic portion of the chain corresponds to 31-223 (GTQSFVFQRE…LTTYLFGQDP (193 aa)). The important for ligand-binding stretch occupies residues 99–106 (SLSEYVLL). Residues 177–223 (VIPSTLAFALSDTIFSTQDFLTLFYTLRAYARGLRLELTTYLFGQDP) form a C-terminal hydrophobic region region.

It belongs to the ERG2 family. As to quaternary structure, homotrimer. Interacts with KCNA2; cocaine consumption leads to increased interaction. Forms a ternary complex with ANK2 and ITPR3. The complex is disrupted by agonists. Interacts with KCNA4. Interacts with RNF112 in an oxidative stress-regulated manner. In terms of tissue distribution, expressed in ependymocytes and neurons throughout the CNS from the olfactory bulb to the spinal cord. Expressed by progenitor, mature and satellite oligodendrocytes and by Schwann cells (at protein level). Expressed in liver, intestine, kidney, brain, lung and heart. Expressed by retinal cells.

The protein localises to the nucleus inner membrane. It is found in the nucleus outer membrane. Its subcellular location is the nucleus envelope. The protein resides in the cytoplasmic vesicle. It localises to the endoplasmic reticulum membrane. The protein localises to the membrane. It is found in the lipid droplet. Its subcellular location is the cell junction. The protein resides in the cell membrane. It localises to the cell projection. The protein localises to the growth cone. It is found in the postsynaptic density membrane. In terms of biological role, functions in lipid transport from the endoplasmic reticulum and is involved in a wide array of cellular functions probably through regulation of the biogenesis of lipid microdomains at the plasma membrane. Involved in the regulation of different receptors it plays a role in BDNF signaling and EGF signaling. Also regulates ion channels like the potassium channel and could modulate neurotransmitter release. Plays a role in calcium signaling through modulation together with ANK2 of the ITP3R-dependent calcium efflux at the endoplasmic reticulum. Plays a role in several other cell functions including proliferation, survival and death. Originally identified for its ability to bind various psychoactive drugs it is involved in learning processes, memory and mood alteration. Necessary for proper mitochondrial axonal transport in motor neurons, in particular the retrograde movement of mitochondria. Plays a role in protecting cells against oxidative stress-induced cell death via its interaction with RNF112. This is Sigma non-opioid intracellular receptor 1 (Sigmar1) from Rattus norvegicus (Rat).